Here is a 135-residue protein sequence, read N- to C-terminus: Transcriptional activator protein (135 aa).

Residues 17–32 carry the Nuclear localization signal motif; it reads KVQHRAAKRKRIRRKR. The segment at 37–54 is a zinc-finger region; that stretch reads CGCSYYVHINCHNHGFTH. The interval 77-115 is disordered; it reads LFQDHSTRQQTVRNEPGHNNRPDTVQPQPEESVGTTSML. A compositionally biased stretch (polar residues) spans 98–114; the sequence is PDTVQPQPEESVGTTSM. Positions 120–135 are transactivation; it reads GLDDLTASDLAFLEGI.

It belongs to the geminiviridae transcriptional activator protein family. In terms of assembly, monomer. Homodimer. Homooligomer. Self-interaction correlates with nuclear localization and efficient activation of transcription. Monomers suppress local silencing by interacting with and inactivating host adenosine kinase 2 (ADK2) in the cytoplasm. Interacts with and inhibits host SNF1 kinase. Binds to ssDNA. In terms of processing, phosphorylated.

The protein localises to the host nucleus. It localises to the host cytoplasm. Strong activator of the late viral genes promoters. Enhances the expression of the capsid protein and nuclear shuttle protein. Acts as a suppressor of RNA-mediated gene silencing, also known as post-transcriptional gene silencing (PTGS), a mechanism of plant viral defense that limits the accumulation of viral RNAs. Suppresses the host RNA silencing by inhibiting adenosine kinase 2 (ADK2), a kinase involved in a general methylation pathway. Also suppresses the host basal defense by interacting with and inhibiting SNF1 kinase, a key regulator of cell metabolism implicated in innate antiviral defense. Determines pathogenicity. The sequence is that of Transcriptional activator protein from Indian cassava mosaic virus (ICMV).